Consider the following 221-residue polypeptide: Probable septum site-determining protein MinC (221 aa).

The protein belongs to the MinC family. As to quaternary structure, interacts with MinD and FtsZ.

In terms of biological role, cell division inhibitor that blocks the formation of polar Z ring septums. Rapidly oscillates between the poles of the cell to destabilize FtsZ filaments that have formed before they mature into polar Z rings. Prevents FtsZ polymerization. This is Probable septum site-determining protein MinC from Shewanella sp. (strain MR-7).